Consider the following 145-residue polypeptide: Mitochondrial import receptor subunit TOM20 homolog (145 aa).

Residues 1–6 (MVGRNS) lie on the Mitochondrial intermembrane side of the membrane. Residues 7–24 (AIAAGVCGALFIGYCIYF) traverse the membrane as a helical segment. Topologically, residues 25–145 (DRKRRSDPNF…AQSLAEDDVE (121 aa)) are cytoplasmic. Glycyl lysine isopeptide (Lys-Gly) (interchain with G-Cter in ubiquitin) cross-links involve residues Lys35, Lys56, Lys61, and Lys68. Phosphoserine occurs at positions 135 and 138.

It belongs to the Tom20 family. In terms of assembly, forms part of the preprotein translocase complex of the outer mitochondrial membrane (TOM complex) which consists of at least 7 different proteins (TOMM5, TOMM6, TOMM7, TOMM20, TOMM22, TOMM40 and TOMM70). Interacts with TOM22. Interacts with APEX1. Interacts with TBC1D21. Upon mitochondrial depolarization, interacts with PINK1; the interaction is required for PINK1-TOM-TIM23 supercomplex formation which is critical for PINK1 stabilization at the outer mitochondrial membrane, kinase activation and downstream mitophagy. In terms of processing, ubiquitinated by PRKN during mitophagy, leading to its degradation and enhancement of mitophagy. Deubiquitinated by USP30. Expressed in brain, kidney, stomach, colon, jejunum, ileum, testis, ovary and oviduct (at protein level). In the brain, expressed in neural cells of the cerebrum and cerebellum (at protein level). In the kidney, expressed in the proximal to distal tubule in the cortex and the outer and inner zones of the medulla (at protein level). In the stomach, expressed in the basal layer of stratified squamous epithelia in the forestomach and in the gastric pit and fundic gland of the glandular stomach (at protein level). Expressed in epithelial cells of the jejunum, ileum, and colon (at protein level). In the testis, expressed by spermatocytes and spermatogonia (at protein level). In the ovaries, expressed by follicular epithelial cells and corpus luteum cells (at protein level). In the oviduct, expressed in the epithelia of the isthmus and the ciliated cells of the ampulla (at protein level). Expressed in the sperm midpiece (at protein level).

It is found in the mitochondrion outer membrane. Functionally, central component of the receptor complex responsible for the recognition and translocation of cytosolically synthesized mitochondrial preproteins. Together with TOM22 functions as the transit peptide receptor at the surface of the mitochondrion outer membrane and facilitates the movement of preproteins into the TOM40 translocation pore. Required for the translocation across the mitochondrial outer membrane of cytochrome P450 monooxygenases. The polypeptide is Mitochondrial import receptor subunit TOM20 homolog (Tomm20) (Mus musculus (Mouse)).